The primary structure comprises 917 residues: Serine/arginine repetitive matrix protein 1 (917 aa).

An N-acetylmethionine modification is found at methionine 1. The tract at residues methionine 1 to lysine 151 is necessary for DNA and RNA-binding. A necessary for mRNA 3'-end cleavage and cytoplasmic accumulation region spans residues methionine 1 to lysine 156. Position 7 is a citrulline (arginine 7). In terms of domain architecture, PWI spans glutamine 27–leucine 126. Residue lysine 127 forms a Glycyl lysine isopeptide (Lys-Gly) (interchain with G-Cter in SUMO2) linkage. Basic and acidic residues predominate over residues glutamate 139–arginine 170. Positions glutamate 139 to serine 917 are disordered. Position 140 is an N6-acetyllysine (lysine 140). Residues serine 171 to serine 207 are compositionally biased toward basic residues. Positions proline 214–serine 234 are enriched in basic and acidic residues. Threonine 220 carries the phosphothreonine modification. Serine 227 carries the post-translational modification Phosphoserine. Residue lysine 231 forms a Glycyl lysine isopeptide (Lys-Gly) (interchain with G-Cter in SUMO1); alternate linkage. Lysine 231 is covalently cross-linked (Glycyl lysine isopeptide (Lys-Gly) (interchain with G-Cter in SUMO2); alternate). 2 positions are modified to phosphoserine: serine 234 and serine 240. Threonine 241 is subject to Phosphothreonine. The span at lysine 246–arginine 275 shows a compositional bias: basic and acidic residues. Lysine 249 participates in a covalent cross-link: Glycyl lysine isopeptide (Lys-Gly) (interchain with G-Cter in SUMO2). Serine 260 is subject to Phosphoserine. 2 stretches are compositionally biased toward basic residues: residues proline 276–proline 329 and proline 336–serine 351. The segment at arginine 300–proline 702 is necessary for speckles and matrix localization. The span at serine 352 to arginine 368 shows a compositional bias: low complexity. Phosphoserine is present on residues serine 389, serine 391, serine 393, and serine 402. Threonine 406 is subject to Phosphothreonine. Serine 414 bears the Phosphoserine mark. Threonine 416 bears the Phosphothreonine mark. Residues serine 420, serine 429, serine 431, and serine 436 each carry the phosphoserine modification. Over residues valine 428–lysine 438 the composition is skewed to polar residues. Lysine 447 is covalently cross-linked (Glycyl lysine isopeptide (Lys-Gly) (interchain with G-Cter in SUMO2)). Serine 450 and serine 452 each carry phosphoserine. Lysine 459 participates in a covalent cross-link: Glycyl lysine isopeptide (Lys-Gly) (interchain with G-Cter in SUMO2). Phosphoserine is present on residues serine 463 and serine 465. A Glycyl lysine isopeptide (Lys-Gly) (interchain with G-Cter in SUMO2) cross-link involves residue lysine 472. Residue serine 478 is modified to Phosphoserine. Residues serine 478–serine 501 are compositionally biased toward low complexity. Over residues glutamate 503 to glycine 518 the composition is skewed to basic and acidic residues. Phosphoserine is present on residues serine 524, serine 526, serine 528, serine 530, serine 532, serine 563, and serine 565. Positions serine 557–serine 574 are enriched in basic residues. Threonine 569 carries the post-translational modification Phosphothreonine. A phosphoserine mark is found at serine 574 and serine 576. The span at proline 581–serine 606 shows a compositional bias: basic residues. Phosphothreonine is present on residues threonine 586, threonine 588, and threonine 595. Serine 597 is subject to Phosphoserine. Low complexity predominate over residues proline 607–serine 619. Residue tyrosine 610 is modified to Phosphotyrosine. Phosphoserine occurs at positions 611, 619, and 621. Threonine 628 carries the post-translational modification Phosphothreonine. Serine 630, serine 640, serine 642, serine 650, and serine 652 each carry phosphoserine. Over residues proline 635–serine 650 the composition is skewed to basic residues. Over residues threonine 663 to glycine 677 the composition is skewed to basic residues. A compositionally biased stretch (pro residues) spans serine 699–valine 713. Phosphoserine occurs at positions 708, 709, 718, 720, 726, and 728. Composition is skewed to low complexity over residues arginine 714 to arginine 732, alanine 749 to proline 772, and serine 782 to valine 799. Residue threonine 731 is modified to Phosphothreonine. Residues serine 751, serine 753, serine 761, serine 765, serine 767, serine 769, serine 782, serine 786, serine 788, and serine 790 each carry the phosphoserine modification. A Phosphothreonine modification is found at threonine 791. 2 positions are modified to phosphoserine: serine 794 and serine 804. Threonine 806 carries the phosphothreonine modification. Phosphoserine occurs at positions 808, 810, and 815. Positions lysine 822–glutamate 847 are enriched in basic residues. Residues valine 850–proline 879 show a composition bias toward low complexity. Lysine 882 is covalently cross-linked (Glycyl lysine isopeptide (Lys-Gly) (interchain with G-Cter in SUMO2)). A Phosphothreonine modification is found at threonine 885. Serine 887 carries the post-translational modification Phosphoserine. A compositionally biased stretch (basic and acidic residues) spans aspartate 895–leucine 905. Serine 914 carries the post-translational modification Phosphoserine.

Belongs to the splicing factor SR family. In terms of assembly, identified in the spliceosome C complex. Found in a pre-mRNA splicing complex with SFRS4, SFRS5, SNRP70, SNRPA1, SRRM1 and SRRM2. Component of the minor spliceosome, which splices U12-type introns. Found in a pre-mRNA exonic splicing enhancer (ESE) complex with SNRP70, SNRPA1, SRRM1 and TRA2B/SFRS10. Found in a mRNA splicing-dependent exon junction complex (EJC) with DEK, PRPF8, NCBP1, RBM8A, RNPS1, SRRM1 and ALYREF/THOC4. Interacts with DDX39B, CPSF1, RBM8A, RNPS1, and ALYREF/THOC4. Seems to be a compound of RNA export complexes that are released from speckles in a ATP-dependent manner. In terms of processing, phosphorylated on multiple serine and threonine residues by DYRK3 during the G2-to-M transition, after the nuclear-envelope breakdown. Phosphorylation by DYRK3 promotes disassembly of nuclear speckles. Post-translationally, citrullinated by PADI4.

Part of pre- and post-splicing multiprotein mRNP complexes. As a component of the minor spliceosome, involved in the splicing of U12-type introns in pre-mRNAs. Involved in numerous pre-mRNA processing events. Promotes constitutive and exonic splicing enhancer (ESE)-dependent splicing activation by bridging together sequence-specific (SR family proteins, SFRS4, SFRS5 and TRA2B/SFRS10) and basal snRNP (SNRP70 and SNRPA1) factors of the spliceosome. Stimulates mRNA 3'-end cleavage independently of the formation of an exon junction complex. Binds both pre-mRNA and spliced mRNA 20-25 nt upstream of exon-exon junctions. Binds RNA and DNA with low sequence specificity and has similar preference for either double- or single-stranded nucleic acid substrates. In Pongo abelii (Sumatran orangutan), this protein is Serine/arginine repetitive matrix protein 1 (SRRM1).